Reading from the N-terminus, the 196-residue chain is Chromophore lyase CpcS/CpeS 2 (196 aa).

Belongs to the CpcS/CpeS biliprotein lyase family.

Its function is as follows. Covalently attaches a chromophore to Cys residue(s) of phycobiliproteins. This is Chromophore lyase CpcS/CpeS 2 from Trichodesmium erythraeum (strain IMS101).